The primary structure comprises 155 residues: Small ribosomal subunit protein uS7 (155 aa).

It belongs to the universal ribosomal protein uS7 family. As to quaternary structure, part of the 30S ribosomal subunit. Contacts proteins S9 and S11.

Functionally, one of the primary rRNA binding proteins, it binds directly to 16S rRNA where it nucleates assembly of the head domain of the 30S subunit. Is located at the subunit interface close to the decoding center, probably blocks exit of the E-site tRNA. This chain is Small ribosomal subunit protein uS7, found in Nautilia profundicola (strain ATCC BAA-1463 / DSM 18972 / AmH).